The primary structure comprises 438 residues: Aspartate--tRNA(Asp/Asn) ligase (438 aa).

Glu176 serves as a coordination point for L-aspartate. Residues 198-201 (QLYK) form an aspartate region. Position 220 (Arg220) interacts with L-aspartate. ATP is bound by residues 220-222 (RAE), 228-230 (RHL), and Glu361. Residues Glu361 and Ser364 each contribute to the Mg(2+) site. L-aspartate contacts are provided by Ser364 and Arg368. 409-412 (GIER) contributes to the ATP binding site.

Belongs to the class-II aminoacyl-tRNA synthetase family. Type 2 subfamily. As to quaternary structure, homodimer. Mg(2+) is required as a cofactor.

The protein resides in the cytoplasm. The enzyme catalyses tRNA(Asx) + L-aspartate + ATP = L-aspartyl-tRNA(Asx) + AMP + diphosphate. In terms of biological role, aspartyl-tRNA synthetase with relaxed tRNA specificity since it is able to aspartylate not only its cognate tRNA(Asp) but also tRNA(Asn). Reaction proceeds in two steps: L-aspartate is first activated by ATP to form Asp-AMP and then transferred to the acceptor end of tRNA(Asp/Asn). The sequence is that of Aspartate--tRNA(Asp/Asn) ligase from Methanococcus aeolicus (strain ATCC BAA-1280 / DSM 17508 / OCM 812 / Nankai-3).